The chain runs to 418 residues: MFKDISIKDYDPDLYQAMVSETKRQESHIELIASENYCSQAVMEAQGSDLTNKYAEGYPGKRYYGGCEYVDIVEQLAIDRAKELFGAEYANVQPHAGSQANSAVFLALLEAGDTVLGMSLDAGGHLTHGAHVNFSGINYNAVQYGLVEETGLIDYDEVERLAQEHKPKMIIAGFSAYSQVVDWQRFRDIADSVGAYLFVDMAHVAGLVAAGVYPSPVPFADVVTTTTHKTLRGPRSGLILSRDDKLAKKLNSAVFPGNQGGPLMHAIAAKAVCFKEALQDDFKTYQQQVVKNAKAMAKVIQERGYEIISGGTENHLMLISLVKQEMTGKEADKWLGDAGITVNKNAVPNDPKSPFVTSGIRIGTPAITTRGFNEAQAADLAGWICDVLDSRGDEKVLADTRAKVEKICAELPVYERNQ.

Residues Leu-120 and 124 to 126 contribute to the (6S)-5,6,7,8-tetrahydrofolate site; that span reads GHL. An N6-(pyridoxal phosphate)lysine modification is found at Lys-229. A (6S)-5,6,7,8-tetrahydrofolate-binding site is contributed by 353 to 355; the sequence is SPF.

This sequence belongs to the SHMT family. In terms of assembly, homodimer. The cofactor is pyridoxal 5'-phosphate.

It localises to the cytoplasm. The catalysed reaction is (6R)-5,10-methylene-5,6,7,8-tetrahydrofolate + glycine + H2O = (6S)-5,6,7,8-tetrahydrofolate + L-serine. It participates in one-carbon metabolism; tetrahydrofolate interconversion. Its pathway is amino-acid biosynthesis; glycine biosynthesis; glycine from L-serine: step 1/1. Its function is as follows. Catalyzes the reversible interconversion of serine and glycine with tetrahydrofolate (THF) serving as the one-carbon carrier. This reaction serves as the major source of one-carbon groups required for the biosynthesis of purines, thymidylate, methionine, and other important biomolecules. Also exhibits THF-independent aldolase activity toward beta-hydroxyamino acids, producing glycine and aldehydes, via a retro-aldol mechanism. The protein is Serine hydroxymethyltransferase of Psychrobacter sp. (strain PRwf-1).